Here is a 464-residue protein sequence, read N- to C-terminus: Glutamate--tRNA ligase (464 aa).

The short motif at 10–20 (PSPTGYLHIGG) is the 'HIGH' region element. Basic and acidic residues predominate over residues 113 to 130 (QEAKKEKPRYDGRWRPEA). The disordered stretch occupies residues 113–142 (QEAKKEKPRYDGRWRPEAGKALPVPPTDVP). The 'KMSKS' region motif lies at 242–246 (KLSKR). Residue Lys-245 coordinates ATP.

It belongs to the class-I aminoacyl-tRNA synthetase family. Glutamate--tRNA ligase type 1 subfamily. Monomer.

The protein localises to the cytoplasm. The enzyme catalyses tRNA(Glu) + L-glutamate + ATP = L-glutamyl-tRNA(Glu) + AMP + diphosphate. Functionally, catalyzes the attachment of glutamate to tRNA(Glu) in a two-step reaction: glutamate is first activated by ATP to form Glu-AMP and then transferred to the acceptor end of tRNA(Glu). The polypeptide is Glutamate--tRNA ligase (Dechloromonas aromatica (strain RCB)).